A 34-amino-acid polypeptide reads, in one-letter code: Leader peptide SpeFL (34 aa).

A sensor domain region spans residues 1-13 (MENNSRTMPHIRR). Positions 10-16 (HIRRTTH) match the Ornithine recognition loop motif. An L-ornithine-binding site is contributed by Arg-13. The segment at 14-34 (TTHIMKFAHRNSFDFHFFNAR) is effector domain.

This sequence belongs to the speF operon leader peptide family. As to quaternary structure, binds ornithine in stalled 70S ribosomes, blocking the upper two-thirds of the exit tunnel. Contacts 23S rRNA and ribosomal proteins L4 and L22.

In terms of biological role, a small protein (arrest peptide) encoded upstream of inducible ornithine carboxylase gene (speF) that controls expression of downstream genes (speF and patE) by nascent chain-translational arrest and transcriptional attenuation. In the presence of ornithine a toeprint due to ribosomal arrest can be seen on the speFL transcript. Only L-ornithine (not other tested amino acids) has this effect. It is thought that in the presence of ornithine, ribosomal stalling on speFL prevents binding of Rho transcription termination factor to a downstream rut site allowing transcription of the operon. In the absence of ornithine, ribosomes terminate translation and are recycled, exposing the rut site allowing Rho to bind and prematurely terminate transcription. The presence of a pair of rare Arg codons could slow down translation to prevent polysome accumulation and to expose the rut site to Rho. This chain is Leader peptide SpeFL, found in Escherichia coli (strain K12).